The primary structure comprises 155 residues: Cytochrome c-type biogenesis protein CcmE (155 aa).

Over 1 to 8 the chain is Cytoplasmic; sequence MNPVRKKR. The helical; Signal-anchor for type II membrane protein transmembrane segment at 9 to 29 threads the bilayer; it reads LFIVLAILAGVGIAVALALSA. Residues 30–155 are Periplasmic-facing; that stretch reads LQQNINLFYT…YEGGKQEYAK (126 aa). Positions 124 and 128 each coordinate heme.

It belongs to the CcmE/CycJ family.

It is found in the cell inner membrane. In terms of biological role, heme chaperone required for the biogenesis of c-type cytochromes. Transiently binds heme delivered by CcmC and transfers the heme to apo-cytochromes in a process facilitated by CcmF and CcmH. The protein is Cytochrome c-type biogenesis protein CcmE of Stutzerimonas stutzeri (strain A1501) (Pseudomonas stutzeri).